A 186-amino-acid polypeptide reads, in one-letter code: Elongation factor P (186 aa).

The protein belongs to the elongation factor P family.

The protein localises to the cytoplasm. It functions in the pathway protein biosynthesis; polypeptide chain elongation. Involved in peptide bond synthesis. Stimulates efficient translation and peptide-bond synthesis on native or reconstituted 70S ribosomes in vitro. Probably functions indirectly by altering the affinity of the ribosome for aminoacyl-tRNA, thus increasing their reactivity as acceptors for peptidyl transferase. This is Elongation factor P from Shewanella loihica (strain ATCC BAA-1088 / PV-4).